Consider the following 149-residue polypeptide: Transcriptional repressor NrdR (149 aa).

A zinc finger spans residues 3–34; the sequence is CPFCSENDTKVIDSRLVADGHQVRRRRQCLAC. Positions 49 to 139 constitute an ATP-cone domain; the sequence is PKVIKSNGNR…VYRSFEDIRE (91 aa).

Belongs to the NrdR family. It depends on Zn(2+) as a cofactor.

Its function is as follows. Negatively regulates transcription of bacterial ribonucleotide reductase nrd genes and operons by binding to NrdR-boxes. This Vibrio atlanticus (strain LGP32) (Vibrio splendidus (strain Mel32)) protein is Transcriptional repressor NrdR.